The primary structure comprises 808 residues: Glycerol-3-phosphate acyltransferase (808 aa).

The HXXXXD motif motif lies at 306–311 (HRSHMD).

This sequence belongs to the GPAT/DAPAT family.

It localises to the cell inner membrane. It carries out the reaction sn-glycerol 3-phosphate + an acyl-CoA = a 1-acyl-sn-glycero-3-phosphate + CoA. The protein operates within phospholipid metabolism; CDP-diacylglycerol biosynthesis; CDP-diacylglycerol from sn-glycerol 3-phosphate: step 1/3. The sequence is that of Glycerol-3-phosphate acyltransferase from Vibrio parahaemolyticus serotype O3:K6 (strain RIMD 2210633).